The sequence spans 365 residues: Protein-glutamate methylesterase/protein-glutamine glutaminase 2 (365 aa).

The Response regulatory domain occupies 18–135 (RVLIVDDSAM…GQGLPAIMRD (118 aa)). 4-aspartylphosphate is present on aspartate 69. Residues 162 to 355 (GASEDWIHAL…ARMMLAAAAD (194 aa)) enclose the CheB-type methylesterase domain. Residues serine 174, histidine 200, and aspartate 297 contribute to the active site.

This sequence belongs to the CheB family. Post-translationally, phosphorylated by CheA. Phosphorylation of the N-terminal regulatory domain activates the methylesterase activity.

It localises to the cytoplasm. The enzyme catalyses [protein]-L-glutamate 5-O-methyl ester + H2O = L-glutamyl-[protein] + methanol + H(+). It catalyses the reaction L-glutaminyl-[protein] + H2O = L-glutamyl-[protein] + NH4(+). In terms of biological role, involved in chemotaxis. Part of a chemotaxis signal transduction system that modulates chemotaxis in response to various stimuli. Catalyzes the demethylation of specific methylglutamate residues introduced into the chemoreceptors (methyl-accepting chemotaxis proteins or MCP) by CheR. Also mediates the irreversible deamidation of specific glutamine residues to glutamic acid. The chain is Protein-glutamate methylesterase/protein-glutamine glutaminase 2 from Cereibacter sphaeroides (strain ATCC 17023 / DSM 158 / JCM 6121 / CCUG 31486 / LMG 2827 / NBRC 12203 / NCIMB 8253 / ATH 2.4.1.) (Rhodobacter sphaeroides).